A 535-amino-acid polypeptide reads, in one-letter code: Phosphoenolpyruvate carboxykinase (ATP) (535 aa).

Substrate is bound by residues arginine 59, tyrosine 201, and lysine 207. Residues lysine 207, histidine 226, and 243 to 251 (GLSGTGKTT) each bind ATP. Residues lysine 207 and histidine 226 each coordinate Mn(2+). Aspartate 264 contacts Mn(2+). Residues glutamate 292, arginine 328, 444–445 (RI), and threonine 450 each bind ATP. Arginine 328 contributes to the substrate binding site.

The protein belongs to the phosphoenolpyruvate carboxykinase (ATP) family. Requires Mn(2+) as cofactor.

It localises to the cytoplasm. The enzyme catalyses oxaloacetate + ATP = phosphoenolpyruvate + ADP + CO2. It functions in the pathway carbohydrate biosynthesis; gluconeogenesis. In terms of biological role, involved in the gluconeogenesis. Catalyzes the conversion of oxaloacetate (OAA) to phosphoenolpyruvate (PEP) through direct phosphoryl transfer between the nucleoside triphosphate and OAA. The polypeptide is Phosphoenolpyruvate carboxykinase (ATP) (Bacteroides thetaiotaomicron (strain ATCC 29148 / DSM 2079 / JCM 5827 / CCUG 10774 / NCTC 10582 / VPI-5482 / E50)).